Reading from the N-terminus, the 559-residue chain is 3-phosphoinositide-dependent protein kinase 1 (559 aa).

Tyrosine 9 bears the Phosphotyrosine; by SRC and INSR mark. Position 25 is a phosphoserine (serine 25). Positions 25 to 83 (SPSMVRSQTEPGSSPGIPSGVSRQGSTMDGTTAEARPSTNPLQQHPAQLPPQPRKKRPE) are disordered. Residues 35 to 44 (PGSSPGIPSG) are compositionally biased toward low complexity. Over residues 45 to 54 (VSRQGSTMDG) the composition is skewed to polar residues. Residues 85 to 345 (FKFGKILGEG…YGPLKAHPFF (261 aa)) form the Protein kinase domain. Residues 95–97 (SFS) and lysine 114 contribute to the ATP site. The interval 116–160 (LEKRHIIKENKVPYVTRERDVMSRLDHPFFVKLYFTFQDDEKLYF) is PIF-pocket. ATP-binding positions include 163–165 (SYA) and glutamate 169. The active-site Proton acceptor is the aspartate 208. ATP contacts are provided by glutamate 212 and aspartate 226. Phosphoserine is present on serine 244. Lysine 307 carries the N6-acetyllysine modification. At threonine 357 the chain carries Phosphothreonine; by MELK. Tyrosine 376 and tyrosine 379 each carry phosphotyrosine; by SRC and INSR. Serine 396 carries the post-translational modification Phosphoserine. Serine 397 carries the post-translational modification Phosphoserine; by MAP3K5. The residue at position 399 (serine 399) is a Phosphoserine. Serine 401 carries the phosphoserine; by MAP3K5 modification. Serine 413 carries the post-translational modification Phosphoserine. In terms of domain architecture, PH spans 462-553 (KMGPVDKRKG…EVWRQQYQSN (92 aa)). Residue serine 504 is modified to Phosphoserine; by PKC/PRKCQ. Threonine 516 carries the post-translational modification Phosphothreonine; by autocatalysis. Serine 532 is subject to Phosphoserine; by PKC/PRKCQ.

The protein belongs to the protein kinase superfamily. AGC Ser/Thr protein kinase family. PDPK1 subfamily. As to quaternary structure, homodimer in its autoinhibited state. Active as monomer. Interacts with NPRL2, PAK1, PTK2B, GRB14, STRAP and IKKB. The Tyr-9 phosphorylated form interacts with SRC, RASA1 and CRK (via their SH2 domains). Interacts with SGK3 in a phosphorylation-dependent manner. The tyrosine-phosphorylated form interacts with PTPN6. The Ser-244 phosphorylated form interacts with YWHAH and YWHAQ. Binds INSR in response to insulin. Interacts (via PH domain) with SMAD3, SMAD4 and SMAD7. Interacts with PKN2; the interaction stimulates PDPK1 autophosphorylation, its PI(3,4,5)P3-dependent kinase activity toward 'Ser-473' of AKT1 but also activates its kinase activity toward PRKCD and PRKCZ. Interacts with PKN1 (via C-terminus) and PPARG. Phosphorylation on Ser-244 in the activation loop is required for full activity. PDPK1 itself can autophosphorylate Ser-244, leading to its own activation. Autophosphorylation is inhibited by the apoptotic C-terminus cleavage product of PKN2. Tyr-9 phosphorylation is critical for stabilization of both PDPK1 and the PDPK1/SRC complex via HSP90-mediated protection of PDPK1 degradation. Angiotensin II stimulates the tyrosine phosphorylation of PDPK1 in vascular smooth muscle in a calcium- and SRC-dependent manner. Phosphorylated on Tyr-9, Tyr-376 and Tyr-379 by INSR in response to insulin. Palmitate negatively regulates autophosphorylation at Ser-244 and palmitate-induced phosphorylation at Ser-532 and Ser-504 by PKC/PRKCQ negatively regulates its ability to phosphorylate PKB/AKT1. Phosphorylation at Thr-357 by MELK partially inhibits kinase activity, the inhibition is cooperatively enhanced by phosphorylation at Ser-397 and Ser-401 by MAP3K5. Post-translationally, monoubiquitinated in the kinase domain, deubiquitinated by USP4. Highly expressed in heart, brain, liver and testis, also expressed in embryonic cells.

It is found in the cytoplasm. Its subcellular location is the nucleus. The protein resides in the cell membrane. It localises to the cell junction. The protein localises to the focal adhesion. It carries out the reaction L-seryl-[protein] + ATP = O-phospho-L-seryl-[protein] + ADP + H(+). The enzyme catalyses L-threonyl-[protein] + ATP = O-phospho-L-threonyl-[protein] + ADP + H(+). Its activity is regulated as follows. Homodimerization regulates its activity by maintaining the kinase in an autoinhibitory conformation. NPRL2 down-regulates its activity by interfering with tyrosine phosphorylation at the Tyr-9, Tyr-376 and Tyr-379 residues. The 14-3-3 protein YWHAQ acts as a negative regulator by association with the residues surrounding the Ser-244 residue. STRAP positively regulates its activity by enhancing its autophosphorylation and by stimulating its dissociation from YWHAQ. SMAD2, SMAD3, SMAD4 and SMAD7 also positively regulate its activity by stimulating its dissociation from YWHAQ. Activated by phosphorylation on Tyr-9, Tyr-376 and Tyr-379 by INSR in response to insulin. In terms of biological role, serine/threonine kinase which acts as a master kinase, phosphorylating and activating a subgroup of the AGC family of protein kinases. Its targets include: protein kinase B (PKB/AKT1, PKB/AKT2, PKB/AKT3), p70 ribosomal protein S6 kinase (RPS6KB1), p90 ribosomal protein S6 kinase (RPS6KA1, RPS6KA2 and RPS6KA3), cyclic AMP-dependent protein kinase (PRKACA), protein kinase C (PRKCD and PRKCZ), serum and glucocorticoid-inducible kinase (SGK1, SGK2 and SGK3), p21-activated kinase-1 (PAK1), TSSK3, protein kinase PKN (PKN1 and PKN2). Plays a central role in the transduction of signals from insulin by providing the activating phosphorylation to PKB/AKT1, thus propagating the signal to downstream targets controlling cell proliferation and survival, as well as glucose and amino acid uptake and storage. Negatively regulates the TGF-beta-induced signaling by: modulating the association of SMAD3 and SMAD7 with TGF-beta receptor, phosphorylating SMAD2, SMAD3, SMAD4 and SMAD7, preventing the nuclear translocation of SMAD3 and SMAD4 and the translocation of SMAD7 from the nucleus to the cytoplasm in response to TGF-beta. Activates PPARG transcriptional activity and promotes adipocyte differentiation. Activates the NF-kappa-B pathway via phosphorylation of IKKB. The tyrosine phosphorylated form is crucial for the regulation of focal adhesions by angiotensin II. Controls proliferation, survival, and growth of developing pancreatic cells. Participates in the regulation of Ca(2+) entry and Ca(2+)-activated K(+) channels of mast cells. Essential for the motility of vascular endothelial cells (ECs) and is involved in the regulation of their chemotaxis. Plays a critical role in cardiac homeostasis by serving as a dual effector for cell survival and beta-adrenergic response. Plays an important role during thymocyte development by regulating the expression of key nutrient receptors on the surface of pre-T cells and mediating Notch-induced cell growth and proliferative responses. Provides negative feedback inhibition to toll-like receptor-mediated NF-kappa-B activation in macrophages. The chain is 3-phosphoinositide-dependent protein kinase 1 (Pdpk1) from Mus musculus (Mouse).